The chain runs to 157 residues: Biotin carboxyl carrier protein of acetyl-CoA carboxylase (157 aa).

The Biotinyl-binding domain maps to 80-156 (YATIVSPMVG…DCGQALMKVE (77 aa)). At Lys122 the chain carries N6-biotinyllysine.

The protein resides in the plastid. The protein localises to the chloroplast. The protein operates within lipid metabolism; fatty acid biosynthesis. Its function is as follows. This protein is a component of the acetyl coenzyme A carboxylase complex; first, biotin carboxylase catalyzes the carboxylation of the carrier protein and then the transcarboxylase transfers the carboxyl group to form malonyl-CoA. This chain is Biotin carboxyl carrier protein of acetyl-CoA carboxylase (accB), found in Porphyra purpurea (Red seaweed).